Here is a 576-residue protein sequence, read N- to C-terminus: Probable vesicular glutamate transporter eat-4 (576 aa).

Over 1-69 (MSSWNEAWDR…QTWIGKCRKR (69 aa)) the chain is Cytoplasmic. Residues 25 to 46 (AAASATGAAPPQQMQEEGNENP) form a disordered region. Residues 36 to 46 (QQMQEEGNENP) are compositionally biased toward polar residues. Residues 70–90 (WLLAILANMGFMISFGIRCNF) traverse the membrane as a helical segment. Over 91 to 121 (GAAKTHMYKNYTDPYGKVHMHEFNWTIDELS) the chain is Extracellular. N-linked (GlcNAc...) asparagine glycosylation is found at asparagine 100 and asparagine 114. Residues 122–142 (VMESSYFYGYLVTQIPAGFLA) form a helical membrane-spanning segment. Residues 143 to 150 (AKFPPNKL) lie on the Cytoplasmic side of the membrane. A helical transmembrane segment spans residues 151–171 (FGFGIGVGAFLNILLPYGFKV). Topologically, residues 172 to 174 (KSD) are extracellular. The helical transmembrane segment at 175–195 (YLVAFIQITQGLVQGVCYPAM) threads the bilayer. Topologically, residues 196-213 (HGVWRYWAPPMERSKLAT) are cytoplasmic. A helical transmembrane segment spans residues 214–234 (TAFTGSYAGAVLGLPLSAFLV). Residues 235-239 (SYVSW) are Extracellular-facing. A helical transmembrane segment spans residues 240–260 (AAPFYLYGVCGVIWAILWFCV). The Cytoplasmic portion of the chain corresponds to 261-305 (TFEKPAFHPTISQEEKIFIEDAIGHVSNTHPTIRSIPWKAIVTSK). Residues 306 to 325 (PVWAIIVANFARSWTFYLLL) form a helical membrane-spanning segment. Over 326–344 (QNQLTYMKEALGMKIADSG) the chain is Extracellular. A helical transmembrane segment spans residues 345-365 (LLAAIPHLVMGCVVLMGGQLA). The Cytoplasmic segment spans residues 366-381 (DYLRSNKILSTTAVRK). Residues 382 to 402 (IFNCGGFGGEAAFMLIVAYTT) traverse the membrane as a helical segment. Topologically, residues 403-406 (SDTT) are extracellular. Residues 407–427 (AIMALIAAVGMSGFAISGFNV) form a helical membrane-spanning segment. The Cytoplasmic segment spans residues 428 to 437 (NHLDIAPRYA). Residues 438–458 (AILMGFSNGIGTLAGLTCPFV) form a helical membrane-spanning segment. The Extracellular portion of the chain corresponds to 459-471 (TEAFTAHSKHGWT). The helical transmembrane segment at 472–492 (SVFLLASLIHFTGVTFYAVYA) threads the bilayer. The Cytoplasmic segment spans residues 493-576 (SGELQEWAEP…VVENPHYQQW (84 aa)).

The protein belongs to the major facilitator superfamily. Sodium/anion cotransporter family. VGLUT subfamily. In terms of tissue distribution, expressed in neurons of the pharynx and the extrapharyngeal nervous system. Highly expressed in male PHC sensory neurons.

It is found in the cell membrane. Its subcellular location is the synapse. Required for glutamatergic synaptic transmission. In AWB and AWC sensory neurons, required for the detection of preferred food sources, probably via glutamatergic neurotransmission from sensory neurons. Negatively regulates the turning step of male mating behavior. The chain is Probable vesicular glutamate transporter eat-4 from Caenorhabditis elegans.